Here is an 844-residue protein sequence, read N- to C-terminus: Bifunctional abietadiene synthase, chloroplastic (844 aa).

Residues 1–46 constitute a chloroplast transit peptide; sequence QSIPHFSTTLNAGSSARKRRSLYLRWGKGSNKIIACVGEGATSVPY. Position 245 (Lys-245) interacts with substrate. Mg(2+)-binding residues include Asp-378 and Asp-380. The DXDD motif motif lies at 378–381; the sequence is DIDD. Residue Lys-465 coordinates substrate. Mg(2+)-binding residues include Asp-597, Asp-601, Asn-741, Thr-745, and Glu-749. The short motif at 597–601 is the DDXXD motif element; it reads DDLYD.

It belongs to the terpene synthase family. Tpsd subfamily. As to quaternary structure, monomer. The cofactor is Mg(2+).

Its subcellular location is the plastid. It is found in the chloroplast. It carries out the reaction (2E,6E,10E)-geranylgeranyl diphosphate = (+)-copalyl diphosphate. The catalysed reaction is (+)-copalyl diphosphate = abieta-7,13-diene + diphosphate. It catalyses the reaction (+)-copalyl diphosphate = neoabietadiene + diphosphate. The enzyme catalyses (+)-copalyl diphosphate = abieta-8(14),12-diene + diphosphate. The protein operates within terpene metabolism; oleoresin biosynthesis. Functionally, involved in defensive oleoresin formation in conifers in response to insect attack or other injury. Involved in diterpene (C20) olefins biosynthesis. Bifunctional enzyme that catalyzes two sequential cyclizations of geranylgeranyl diphosphate (GGPP) to abietadiene. The copalyl diphosphate (CPP) intermediate diffuses freely between the 2 active sites in the enzyme. The chain is Bifunctional abietadiene synthase, chloroplastic (LAS) from Abies balsamea (Balsam fir).